The primary structure comprises 711 residues: Myb-like protein B (711 aa).

The span at 24 to 50 (QPQQSIQQQQQQQQQQQQQQQQQQQQQ) shows a compositional bias: low complexity. Disordered stretches follow at residues 24 to 70 (QPQQ…SPQL) and 113 to 235 (NYHT…IINN). Composition is skewed to polar residues over residues 113–139 (NYHT…SPPT) and 148–157 (TPLSSSTGFS). Low complexity-rich tracts occupy residues 158 to 187 (NNNN…NNNI) and 198 to 235 (NNYP…IINN). HTH myb-type domains follow at residues 428-490 (RESI…SPEI) and 491-542 (KKGS…SRQT). 2 consecutive DNA-binding regions (H-T-H motif) follow at residues 462-486 (WKKI…KRVL) and 514-538 (WKNV…KAIM). A Myb-like domain is found at 540–598 (RQTEWNQLEDDILTKKIKLMTQNNEKISFQQVSKHLARAKTTKIPRTALECKSRWSQLN). The disordered stretch occupies residues 598–640 (NSTNVNNNNNNNNNSITTSSSNTNQQQQSTMVTPTSSPLSSPI).

Its subcellular location is the nucleus. Functionally, transcriptional activator that initiates multicellular development by induction of adenylyl cyclase expression. The polypeptide is Myb-like protein B (mybB) (Dictyostelium discoideum (Social amoeba)).